The primary structure comprises 351 residues: N-acetyl-gamma-glutamyl-phosphate reductase (351 aa).

Residue Cys154 is part of the active site.

Belongs to the NAGSA dehydrogenase family. Type 1 subfamily.

The protein resides in the cytoplasm. It carries out the reaction N-acetyl-L-glutamate 5-semialdehyde + phosphate + NADP(+) = N-acetyl-L-glutamyl 5-phosphate + NADPH + H(+). It functions in the pathway amino-acid biosynthesis; L-arginine biosynthesis; N(2)-acetyl-L-ornithine from L-glutamate: step 3/4. Catalyzes the NADPH-dependent reduction of N-acetyl-5-glutamyl phosphate to yield N-acetyl-L-glutamate 5-semialdehyde. In Prochlorococcus marinus subsp. pastoris (strain CCMP1986 / NIES-2087 / MED4), this protein is N-acetyl-gamma-glutamyl-phosphate reductase.